A 457-amino-acid chain; its full sequence is Adenylosuccinate synthetase isozyme 2 A (457 aa).

GTP-binding positions include 40–46 and 68–70; these read GDEGKGK and GHT. The Proton acceptor role is filled by Asp41. Positions 41 and 68 each coordinate Mg(2+). A substrate-binding site is contributed by Asp41. IMP contacts are provided by residues 41–44, 66–69, Thr163, Arg177, Asn256, Thr271, and Arg335; these read DEGK and NAGH. The active-site Proton donor is the His69. Residue 331–337 participates in substrate binding; sequence VTTGRKR. Residues Arg337, 363-365, and 445-448 each bind GTP; these read KLD and GVGK.

Belongs to the adenylosuccinate synthetase family. Homodimer. It depends on Mg(2+) as a cofactor.

Its subcellular location is the cytoplasm. It is found in the mitochondrion. It catalyses the reaction IMP + L-aspartate + GTP = N(6)-(1,2-dicarboxyethyl)-AMP + GDP + phosphate + 2 H(+). It functions in the pathway purine metabolism; AMP biosynthesis via de novo pathway; AMP from IMP: step 1/2. With respect to regulation, inhibited competitively by AMP and IMP and non-competitively by fructose 1,6-bisphosphate. Functionally, plays an important role in the de novo pathway and in the salvage pathway of purine nucleotide biosynthesis. Catalyzes the first committed step in the biosynthesis of AMP from IMP. The protein is Adenylosuccinate synthetase isozyme 2 A (adss2-a) of Xenopus tropicalis (Western clawed frog).